The following is a 195-amino-acid chain: Protein hunchback (195 aa).

3 disordered regions span residues 16 to 57, 64 to 83, and 155 to 195; these read SHHH…SHTN, LKQQQQQQQQHQHQQQQQPM, and LTPP…KYMA. Positions 17-29 are enriched in basic residues; the sequence is HHHHHHHAHHSHH. Low complexity-rich tracts occupy residues 33–44 and 66–81; these read SNSNSNASSPHQ and QQQQQQQQHQHQQQQQ. Residues 176–195 show a composition bias toward basic and acidic residues; it reads EPEKEHDLMSNSSEDMKYMA.

Belongs to the hunchback C2H2-type zinc-finger protein family.

The protein localises to the nucleus. Its function is as follows. Gap class segmentation protein that controls development of head structures. In Drosophila dasycnemia (Fruit fly), this protein is Protein hunchback (hb).